Reading from the N-terminus, the 395-residue chain is [LysW]-aminoadipate semialdehyde transaminase (395 aa).

Pyridoxal 5'-phosphate contacts are provided by residues 113 to 114 (GT) and F140. R143 provides a ligand contact to substrate. Residue 225 to 228 (DEIQ) participates in pyridoxal 5'-phosphate binding. Position 254 is an N6-(pyridoxal phosphate)lysine (K254). T282 contacts substrate. T283 provides a ligand contact to pyridoxal 5'-phosphate.

This sequence belongs to the class-III pyridoxal-phosphate-dependent aminotransferase family. LysJ subfamily. As to quaternary structure, homodimer. Pyridoxal 5'-phosphate is required as a cofactor.

The protein localises to the cytoplasm. It catalyses the reaction [amino-group carrier protein]-C-terminal-gamma-(L-lysyl)-L-glutamate + 2-oxoglutarate = [amino-group carrier protein]-C-terminal-N-(1-carboxy-5-oxopentan-1-yl)-L-glutamine + L-glutamate. It participates in amino-acid biosynthesis; L-lysine biosynthesis via AAA pathway; L-lysine from L-alpha-aminoadipate (Thermus route): step 4/5. Catalyzes the transfer of the amino group of L-glutamate to [LysW]-aminoadipate 6-semialdehyde, generating [LysW]-gamma-L-lysine. The sequence is that of [LysW]-aminoadipate semialdehyde transaminase from Thermus thermophilus (strain ATCC 27634 / DSM 579 / HB8).